Here is an 818-residue protein sequence, read N- to C-terminus: ATM interactor (818 aa).

The span at 1-34 (MAATEAAAADSAGPAPGVPATPASTRGAAAASSP) shows a compositional bias: low complexity. Residues 1 to 62 (MAATEAAAAD…RAAAPVPPAR (62 aa)) form a disordered region. The C2H2-type 1 zinc-finger motif lies at 80–105 (ILCTVRGCGKILPNSPALNMHLVKSH). The segment at 161–181 (HKCSKCSNSYGTEWDLKRHEE) adopts a C2H2-type 2; degenerate zinc-finger fold. A compositionally biased stretch (basic and acidic residues) spans 210 to 221 (HEIPAEHRDPPS). Disordered stretches follow at residues 210–284 (HEIP…ATPP) and 603–625 (DNRS…GSAQ). Residues 219-437 (PPSKKRKMES…PDSSVSSCSQ (219 aa)) form a required for formation of RAD51 foci region. Polar residues-rich tracts occupy residues 229–243 (YLQN…TEPL) and 603–612 (DNRSLLSDTN).

In terms of assembly, interacts via its C-terminus with ATM. Interacts with DYNLL; this interaction inhibits ATMIN transcriptional activity and hence may play a role in a feedback loop whereby DYNLL1 inhibits transactivation of its own promoter by ATMIN. ATMIN.

The protein resides in the nucleus. Transcription factor. Plays a crucial role in cell survival and RAD51 foci formation in response to methylating DNA damage. Involved in regulating the activity of ATM in the absence of DNA damage. May play a role in stabilizing ATM. Binds to the DYNLL1 promoter and activates its transcription. The chain is ATM interactor from Mus musculus (Mouse).